We begin with the raw amino-acid sequence, 262 residues long: Cyclin-dependent kinase inhibitor 1 (262 aa).

Residues 140 to 212 (SDVAEAGSEH…SAQQATRPKI (73 aa)) form a disordered region. Residues 160–169 (SGRDRERRET) show a composition bias toward basic and acidic residues. Residues 198–208 (SAATASAQQAT) are compositionally biased toward low complexity.

The protein belongs to the CDI family. ICK/KRP subfamily. Expressed in roots, stems, leaves and apex.

Its function is as follows. Regulates the production of endosperm cells, affecting seed filling and embryo development. Regulates endoreduplication of endosperm cells. May play a role in the exit from the mitotic cell cycle during rice grain formation. Inhibitis leaf elongation rates by decreasing cell number, that is partly compensated by increased cell size. May not affect growth rate or cell size of the primary root. The sequence is that of Cyclin-dependent kinase inhibitor 1 (KRP1) from Oryza sativa subsp. japonica (Rice).